Consider the following 283-residue polypeptide: Transport and Golgi organization protein 2 (283 aa).

The protein belongs to the Tango2 family.

It localises to the cytoplasm. It is found in the mitochondrion. The protein resides in the golgi apparatus. In terms of biological role, may play a role in Golgi organization. The protein is Transport and Golgi organization protein 2 (Tango2) of Drosophila melanogaster (Fruit fly).